We begin with the raw amino-acid sequence, 420 residues long: MLSRKIGIDHILKHIENKRVLMRVDFNVPLKEGKVKDPTRIQGSVPSIKKILEQNPKGLVLMSHLGRPDGNRVEKHSMKPVVPKLEELLGTKVTFLNDCVGKDVEEAVKSSRNGEIILLENLRFHPEEEGKYIDAAGNKVKADSKAVKEFRKSLTSLGDLFVNDAFGTAHRAHSSMVGVDHKIRAAGYLLKRELDYFSKALESPNRPFLVVLGGAKVKDKIQLIESMLDKVDEMIIGGGMAFTFLKKIHNIEIGNSLFDEEGYKIVDQLLEKAKAKNVKIHLPVDFLCGDSLEANANTRSFDLKSGIPAGWIGLDAGPKTMAENAEAVARANTIVWNGPQGRFEVDKFKVGSSDLLKHVATRTSQGATSIIGGGDTVNLVQQEKATQKVSHVSTGGGASLELLEGKVLPGVAYLTDIDQL.

The (2R)-3-phosphoglycerate site is built by valine 24, aspartate 25, phenylalanine 26, asparagine 27, arginine 40, serine 63, histidine 64, glycine 66, arginine 67, leucine 122, arginine 123, histidine 170, and arginine 171. Residue glycine 214 coordinates ADP. Glycine 214 provides a ligand contact to CDP. AMP is bound by residues alanine 215 and lysine 216. An ATP-binding site is contributed by alanine 215. Alanine 215 serves as a coordination point for Mg(2+). Aspartate 219 contributes to the CDP binding site. Mg(2+) is bound at residue aspartate 219. AMP is bound at residue lysine 220. ATP is bound at residue lysine 220. Glycine 238 contributes to the ADP binding site. CDP is bound at residue glycine 238. The AMP site is built by glycine 239 and glycine 313. Glycine 239 and glycine 313 together coordinate ATP. The CDP site is built by glycine 338 and phenylalanine 343. ADP is bound at residue phenylalanine 343. Glutamate 344 provides a ligand contact to AMP. 3 residues coordinate ATP: glutamate 344, aspartate 375, and threonine 376. Aspartate 375 is a Mg(2+) binding site.

The protein belongs to the phosphoglycerate kinase family. In terms of assembly, monomer. Mg(2+) serves as cofactor.

It carries out the reaction (2R)-3-phosphoglycerate + ATP = (2R)-3-phospho-glyceroyl phosphate + ADP. It functions in the pathway carbohydrate degradation; glycolysis; pyruvate from D-glyceraldehyde 3-phosphate: step 2/5. The sequence is that of Phosphoglycerate kinase (PGK) from Tetrahymena thermophila.